A 901-amino-acid polypeptide reads, in one-letter code: MLIPSKLSRPVRLDHTVVRERLLAKLSGANNFRLALITSPAGYGKTTLISQWAAGKNDIGWYSLDEGDNQQERFASYLIAAMQQATNGHCAICETMAQKRQYASLTSLFAQLFIELAEWHSPLYLVIDDYHLITNPVIHESMRFFIRHQPENLTLVVLSRNLPQLGIANLRVRDQLLEIGSQQLAFTHQEAKQFFDCRLSSPIEAAESSRICDDVSGWATALQLIALSARQNTHSAHKSARRLAGINASHLSDYLVDEVLDNVDLATRHFLLKSAILRSMNDALINRVTGEENGQMRLEEIERQGLFLQRMDDTGEWFCYHPLFGNFLRQRCQWELAAELPEIHRAAAESWMAQGFPSEAIHHALAAGDALMLRDILLNHAWSLFNHSELSLLEESLKALPWDSLLENPQLVLLQAWLMQSQHRYGEVNTLLARAEHEIKDIREGTMHAEFNALRAQVAINDGNPDEAERLAKLALEELPPGWFYSRIVATSVLGEVLHCKGELTRSLALMQQTEQMARQHDVWHYALWSLIQQSEILFAQGFLQTAWETQEKAFQLINEQHLEQLPMHEFLVRIRAQLLWAWARLDEAEASARSGIEVLSSYQPQQQLQCLAMLIQCSLARGDLDNARSQLNRLENLLGNGKYHSDWISNANKVRVIYWQMTGDKAAAANWLRHTAKPEFANNHFLQGQWRNIARAQILLGEFEPAEIVLEELNENARSLRLMSDLNRNLLLLNQLYWQAGRKSDAQRVLLDALKLANRTGFISHFVIEGEAMAQQLRQLIQLNTLPELEQHRAQRILREINQHHRHKFAHFDENFVERLLNHPEVPELIRTSPLTQREWQVLGLIYSGYSNEQIAGELEVAATTIKTHIRNLYQKLGVAHRQAAVQHAQKLLKMMGYGV.

39 to 46 (SPAGYGKT) is an ATP binding site. An HTH luxR-type domain is found at 829 to 894 (ELIRTSPLTQ…AAVQHAQKLL (66 aa)). A DNA-binding region (H-T-H motif) is located at residues 853–872 (NEQIAGELEVAATTIKTHIR).

The protein belongs to the MalT family. In terms of assembly, monomer in solution. Oligomerizes to an active state in the presence of the positive effectors ATP and maltotriose.

With respect to regulation, activated by ATP and maltotriose, which are both required for DNA binding. Functionally, positively regulates the transcription of the maltose regulon whose gene products are responsible for uptake and catabolism of malto-oligosaccharides. Specifically binds to the promoter region of its target genes, recognizing a short DNA motif called the MalT box. This is HTH-type transcriptional regulator MalT from Escherichia coli O127:H6 (strain E2348/69 / EPEC).